The sequence spans 354 residues: Arginase-2, mitochondrial (354 aa).

The N-terminal 22 residues, 1–22, are a transit peptide targeting the mitochondrion; the sequence is MFLRSSASRLLHGQIPCVLTRS. Positions 120, 143, 145, and 147 each coordinate Mn(2+). Substrate is bound by residues 145–149, 156–158, and glutamate 202; these read HADIN and SGN. Residues aspartate 251 and aspartate 253 each coordinate Mn(2+). The substrate site is built by threonine 265 and glutamate 296.

Belongs to the arginase family. As to quaternary structure, homotrimer. Requires Mn(2+) as cofactor.

The protein localises to the mitochondrion. It carries out the reaction L-arginine + H2O = urea + L-ornithine. The protein operates within nitrogen metabolism; urea cycle; L-ornithine and urea from L-arginine: step 1/1. Its function is as follows. May play a role in the regulation of extra-urea cycle arginine metabolism and also in down-regulation of nitric oxide synthesis. Extrahepatic arginase functions to regulate L-arginine bioavailability to nitric oxid synthase (NOS). Arginine metabolism is a critical regulator of innate and adaptive immune responses. Seems to be involved in negative regulation of the survival capacity of activated CD4(+) and CD8(+) T cells. May suppress inflammation-related signaling in asthmatic airway epithelium. May contribute to the immune evasion of H.pylori by restricting M1 macrophage activation and polyamine metabolism. May play a role in promoting prenatal immune suppression. Regulates RPS6KB1 signaling, which promotes endothelial cell senescence and inflammation and implicates NOS3/eNOS dysfunction. Can inhibit endothelial autophagy independently of its enzymatic activity implicating mTORC2 signaling. Involved in vascular smooth muscle cell senescence and apoptosis independently of its enzymatic activity. The protein is Arginase-2, mitochondrial (Arg2) of Mus musculus (Mouse).